Here is a 202-residue protein sequence, read N- to C-terminus: 3-isopropylmalate dehydratase small subunit (202 aa).

Belongs to the LeuD family. LeuD type 1 subfamily. Heterodimer of LeuC and LeuD.

It carries out the reaction (2R,3S)-3-isopropylmalate = (2S)-2-isopropylmalate. Its pathway is amino-acid biosynthesis; L-leucine biosynthesis; L-leucine from 3-methyl-2-oxobutanoate: step 2/4. Catalyzes the isomerization between 2-isopropylmalate and 3-isopropylmalate, via the formation of 2-isopropylmaleate. In Blochmanniella pennsylvanica (strain BPEN), this protein is 3-isopropylmalate dehydratase small subunit.